Consider the following 368-residue polypeptide: DNA replication and repair protein RecF (368 aa).

30–37 (GNNAQGKT) serves as a coordination point for ATP.

Belongs to the RecF family.

The protein localises to the cytoplasm. The RecF protein is involved in DNA metabolism; it is required for DNA replication and normal SOS inducibility. RecF binds preferentially to single-stranded, linear DNA. It also seems to bind ATP. The protein is DNA replication and repair protein RecF of Streptococcus pyogenes serotype M6 (strain ATCC BAA-946 / MGAS10394).